Consider the following 77-residue polypeptide: Large ribosomal subunit protein bL31 (77 aa).

It belongs to the bacterial ribosomal protein bL31 family. Type A subfamily. As to quaternary structure, part of the 50S ribosomal subunit.

Functionally, binds the 23S rRNA. This is Large ribosomal subunit protein bL31 from Synechococcus elongatus (strain ATCC 33912 / PCC 7942 / FACHB-805) (Anacystis nidulans R2).